Here is an 88-residue protein sequence, read N- to C-terminus: MTDQIRTLQGRVVSDKMEKSMVVAIERVVKHPIYGKFIRRTTKLHVHDENNECGIGDVVEIRECRPLSKTKSWTLVVPRKPPARLGVQ.

This sequence belongs to the universal ribosomal protein uS17 family. Part of the 30S ribosomal subunit.

In terms of biological role, one of the primary rRNA binding proteins, it binds specifically to the 5'-end of 16S ribosomal RNA. This chain is Small ribosomal subunit protein uS17, found in Yersinia pseudotuberculosis serotype O:1b (strain IP 31758).